A 355-amino-acid polypeptide reads, in one-letter code: S-adenosylmethionine:tRNA ribosyltransferase-isomerase (355 aa).

Belongs to the QueA family. Monomer.

It localises to the cytoplasm. The enzyme catalyses 7-aminomethyl-7-carbaguanosine(34) in tRNA + S-adenosyl-L-methionine = epoxyqueuosine(34) in tRNA + adenine + L-methionine + 2 H(+). It functions in the pathway tRNA modification; tRNA-queuosine biosynthesis. Its function is as follows. Transfers and isomerizes the ribose moiety from AdoMet to the 7-aminomethyl group of 7-deazaguanine (preQ1-tRNA) to give epoxyqueuosine (oQ-tRNA). The protein is S-adenosylmethionine:tRNA ribosyltransferase-isomerase of Burkholderia ambifaria (strain ATCC BAA-244 / DSM 16087 / CCUG 44356 / LMG 19182 / AMMD) (Burkholderia cepacia (strain AMMD)).